The following is a 566-amino-acid chain: Membrane protein insertase YidC (566 aa).

A run of 5 helical transmembrane segments spans residues 3–23 (IKRIILYVIVALLAIALFNAW), 346–366 (GWLWPISMLLFWILSSVHAVV), 369–389 (WGWSIIITTILIKIVFYWFSA), 436–456 (GGCLPMLIQVPVFIAFYYVII), and 509–529 (MWILPVIFTVFFINFPAGLVL).

The protein belongs to the OXA1/ALB3/YidC family. Type 1 subfamily. Interacts with the Sec translocase complex via SecD. Specifically interacts with transmembrane segments of nascent integral membrane proteins during membrane integration.

Its subcellular location is the cell inner membrane. Functionally, required for the insertion and/or proper folding and/or complex formation of integral membrane proteins into the membrane. Involved in integration of membrane proteins that insert both dependently and independently of the Sec translocase complex, as well as at least some lipoproteins. Aids folding of multispanning membrane proteins. This Coxiella burnetii (strain Dugway 5J108-111) protein is Membrane protein insertase YidC.